The chain runs to 131 residues: Histone H2B (131 aa).

Positions 1–19 are enriched in basic and acidic residues; it reads MAPKAEKKPASKAPAEKKP. The tract at residues 1-38 is disordered; it reads MAPKAEKKPASKAPAEKKPAAKKTASSTDGGKKRTKAR. K7 and K8 each carry N6-acetyllysine; alternate. Residues K7 and K8 each participate in a glycyl lysine isopeptide (Lys-Gly) (interchain with G-Cter in SUMO); alternate cross-link. S11 is subject to Phosphoserine. Residue K12 is modified to N6-acetyllysine. K17 is subject to N6-acetyllysine; alternate. Residue K17 forms a Glycyl lysine isopeptide (Lys-Gly) (interchain with G-Cter in SUMO); alternate linkage. K18 participates in a covalent cross-link: Glycyl lysine isopeptide (Lys-Gly) (interchain with G-Cter in SUMO). A Glycyl lysine isopeptide (Lys-Gly) (interchain with G-Cter in ubiquitin) cross-link involves residue K125.

Belongs to the histone H2B family. As to quaternary structure, the nucleosome is a histone octamer containing two molecules each of H2A, H2B, H3 and H4 assembled in one H3-H4 heterotetramer and two H2A-H2B heterodimers. The octamer wraps approximately 147 bp of DNA. Post-translationally, monoubiquitinated by the UBC2-BRE1 complex to form H2BK123ub1. H2BK123ub1 gives a specific tag for epigenetic transcriptional activation and is also prerequisite for H3K4me and H3K79me formation. H2BK123ub1 also modulates the formation of double-strand breaks during meiosis and is a prerequisite for DNA-damage checkpoint activation. Phosphorylated by STE20 to form H2BS10ph during progression through meiotic prophase. May be correlated with chromosome condensation. In terms of processing, acetylated by GCN5 to form H2BK11ac and H2BK16ac. H2BK16ac can also be formed by ESA1. Acetylation of N-terminal lysines and particularly formation of H2BK11acK16ac has a positive effect on transcription. Post-translationally, sumoylation to form H2BK6su or H2BK7su, and probably also H2BK16su or H2BK17su, occurs preferentially near the telomeres and represses gene transcription.

The protein resides in the nucleus. Its subcellular location is the chromosome. Core component of nucleosome. Nucleosomes wrap and compact DNA into chromatin, limiting DNA accessibility to the cellular machineries which require DNA as a template. Histones thereby play a central role in transcription regulation, DNA repair, DNA replication and chromosomal stability. DNA accessibility is regulated via a complex set of post-translational modifications of histones, also called histone code, and nucleosome remodeling. The protein is Histone H2B (HTB1) of Lodderomyces elongisporus (strain ATCC 11503 / CBS 2605 / JCM 1781 / NBRC 1676 / NRRL YB-4239) (Yeast).